Consider the following 538-residue polypeptide: Translation initiation factor IF-3, chloroplastic (538 aa).

The transit peptide at 1-140 (MVRSSCLQCD…VTQRKEIAVF (140 aa)) directs the protein to the chloroplast. The tract at residues 141–290 (SASGQAAEPE…EEVEEEQEVL (150 aa)) is head. 2 disordered regions span residues 146–165 (AAEPEGAEPLKRPFPSPAAK) and 188–210 (RTDSTYGRGPRSTSFTDISNWPS). The tract at residues 291 to 474 (SWADRRRALA…LILNLAPAGE (184 aa)) is IF-3 like. A disordered region spans residues 484–538 (AERDRKAAAEEEGEGDDLDFVDENEDEDVEGEGEEEEAEELEEETAEGTEVPTRS). Positions 493 to 530 (EEEGEGDDLDFVDENEDEDVEGEGEEEEAEELEEETAE) are enriched in acidic residues.

It belongs to the IF-3 family. As to quaternary structure, monomer. The N-terminus is blocked.

Its subcellular location is the plastid. The protein localises to the chloroplast. In terms of biological role, involved in chloroplast protein synthesis. It enhances the poly(A,U,G)-dependent binding of the initiator tRNA to chloroplast 30S subunits. In Euglena gracilis, this protein is Translation initiation factor IF-3, chloroplastic.